A 329-amino-acid polypeptide reads, in one-letter code: Peroxidase 73 (329 aa).

The N-terminal stretch at 1–25 is a signal peptide; that stretch reads MARFSLVVVVTLSLAISMFPDTTTA. Disulfide bonds link cysteine 36-cysteine 119, cysteine 69-cysteine 74, cysteine 125-cysteine 325, and cysteine 204-cysteine 236. The active-site Proton acceptor is histidine 67. 5 residues coordinate Ca(2+): aspartate 68, valine 71, glycine 73, aspartate 75, and serine 77. Position 167 (proline 167) interacts with substrate. Residue histidine 197 participates in heme b binding. Threonine 198 is a binding site for Ca(2+). The N-linked (GlcNAc...) asparagine glycan is linked to asparagine 215. Residues aspartate 249, threonine 252, and aspartate 257 each contribute to the Ca(2+) site.

This sequence belongs to the peroxidase family. Classical plant (class III) peroxidase subfamily. It depends on heme b as a cofactor. Ca(2+) serves as cofactor. In terms of tissue distribution, expressed in the whole plant, with the highest expression in roots.

Its subcellular location is the secreted. The catalysed reaction is 2 a phenolic donor + H2O2 = 2 a phenolic radical donor + 2 H2O. Functionally, removal of H(2)O(2), oxidation of toxic reductants, biosynthesis and degradation of lignin, suberization, auxin catabolism, response to environmental stresses such as wounding, pathogen attack and oxidative stress. These functions might be dependent on each isozyme/isoform in each plant tissue. The protein is Peroxidase 73 (PER73) of Arabidopsis thaliana (Mouse-ear cress).